The following is a 207-amino-acid chain: Transcriptional regulator YqjI (207 aa).

A compositionally biased stretch (basic and acidic residues) spans 1–40; sequence MSHHHEGCCKHEGQPRHEGCCKGEKSEHEHCGHGHQHEHG. The interval 1-46 is disordered; the sequence is MSHHHEGCCKHEGQPRHEGCCKGEKSEHEHCGHGHQHEHGQCCGGR.

Oligomer (probable predominant form) and monomer.

With respect to regulation, divalent metals such as nickel and iron have a similar negative effect on YqjI DNA-binding activity. In terms of biological role, represses the expression of YqjH which is involved in iron homeostasis under excess nickel conditions. Also represses its own expression. In Escherichia coli (strain K12), this protein is Transcriptional regulator YqjI (yqjI).